The sequence spans 573 residues: Sulfite reductase [NADPH] hemoprotein beta-component (573 aa).

[4Fe-4S] cluster is bound by residues Cys-438, Cys-444, Cys-483, and Cys-487. Cys-487 serves as a coordination point for siroheme.

The protein belongs to the nitrite and sulfite reductase 4Fe-4S domain family. Alpha(8)-beta(8). The alpha component is a flavoprotein, the beta component is a hemoprotein. Siroheme serves as cofactor. It depends on [4Fe-4S] cluster as a cofactor.

The enzyme catalyses hydrogen sulfide + 3 NADP(+) + 3 H2O = sulfite + 3 NADPH + 4 H(+). It participates in sulfur metabolism; hydrogen sulfide biosynthesis; hydrogen sulfide from sulfite (NADPH route): step 1/1. Its function is as follows. Component of the sulfite reductase complex that catalyzes the 6-electron reduction of sulfite to sulfide. This is one of several activities required for the biosynthesis of L-cysteine from sulfate. This Geobacillus thermodenitrificans (strain NG80-2) protein is Sulfite reductase [NADPH] hemoprotein beta-component.